Here is a 316-residue protein sequence, read N- to C-terminus: Coiled-coil domain-containing protein 42 (316 aa).

Coiled-coil stretches lie at residues 39-146 and 178-232; these read SPSI…SAKL and LVSM…DRAR.

It belongs to the CFAP73 family. In terms of assembly, interacts with ODF1 and ODF2. Interacts with CCDC38. Interacts with CCDC146. Interacts with CFAP53.

It localises to the cytoplasm. It is found in the perinuclear region. Its subcellular location is the cytoskeleton. The protein resides in the cell projection. The protein localises to the cilium. It localises to the flagellum. It is found in the microtubule organizing center. Its subcellular location is the centrosome. Functionally, essential for male fertility. Required for sperm development. The protein is Coiled-coil domain-containing protein 42 of Homo sapiens (Human).